Here is a 396-residue protein sequence, read N- to C-terminus: Enoyl-[acyl-carrier-protein] reductase [NADH] (396 aa).

Residues 48–53, 74–75, 111–112, and 139–140 each bind NAD(+); these read GASTGY, FE, DA, and LA. Tyr-225 is a binding site for substrate. The active-site Proton donor is Tyr-235. NAD(+) is bound by residues Lys-244 and 273–275; that span reads VVT.

It belongs to the TER reductase family. In terms of assembly, monomer.

The catalysed reaction is a 2,3-saturated acyl-[ACP] + NAD(+) = a (2E)-enoyl-[ACP] + NADH + H(+). Its pathway is lipid metabolism; fatty acid biosynthesis. Its function is as follows. Involved in the final reduction of the elongation cycle of fatty acid synthesis (FAS II). Catalyzes the reduction of a carbon-carbon double bond in an enoyl moiety that is covalently linked to an acyl carrier protein (ACP). The polypeptide is Enoyl-[acyl-carrier-protein] reductase [NADH] (Teredinibacter turnerae (strain ATCC 39867 / T7901)).